Consider the following 529-residue polypeptide: Peptide chain release factor 3 (529 aa).

Residues 11–280 form the tr-type G domain; the sequence is AKRRTFAIIS…GLVEWAPAPM (270 aa). GTP-binding positions include 20–27, 88–92, and 142–145; these read SHPDAGKT, DTPGH, and NKLD.

Belongs to the TRAFAC class translation factor GTPase superfamily. Classic translation factor GTPase family. PrfC subfamily.

It localises to the cytoplasm. In terms of biological role, increases the formation of ribosomal termination complexes and stimulates activities of RF-1 and RF-2. It binds guanine nucleotides and has strong preference for UGA stop codons. It may interact directly with the ribosome. The stimulation of RF-1 and RF-2 is significantly reduced by GTP and GDP, but not by GMP. The sequence is that of Peptide chain release factor 3 from Yersinia enterocolitica serotype O:8 / biotype 1B (strain NCTC 13174 / 8081).